The sequence spans 568 residues: Protein KATNIP homolog (568 aa).

Basic and acidic residues predominate over residues 1–20 (MSDSDLKEIEKNAENIKLEP). Residues 1 to 30 (MSDSDLKEIEKNAENIKLEPAEDEVNEEDQ) form a disordered region. Over residues 21-30 (AEDEVNEEDQ) the composition is skewed to acidic residues.

In terms of tissue distribution, expressed in most ciliated neuronal cells. Not expressed in non-ciliated cells.

The protein localises to the cytoplasm. It localises to the cytoskeleton. It is found in the cilium axoneme. Its subcellular location is the cilium basal body. In terms of biological role, may regulate ciliary A-tubule number and, along with arl-13, controls cilium integrity. This Caenorhabditis elegans protein is Protein KATNIP homolog.